A 334-amino-acid chain; its full sequence is Protein-methionine-sulfoxide reductase catalytic subunit MsrP (334 aa).

The segment at residues 1–44 is a signal peptide (tat-type signal); sequence MKKIRPLTEADVTAESAFFMQRRQVLKALGISAAALSLPSTAQA. Residues asparagine 88, 91 to 92, cysteine 146, threonine 181, asparagine 233, arginine 238, and 249 to 251 each bind Mo-molybdopterin; these read YE and GIK.

The protein belongs to the MsrP family. In terms of assembly, heterodimer of a catalytic subunit (MsrP) and a heme-binding subunit (MsrQ). Mo-molybdopterin serves as cofactor. Predicted to be exported by the Tat system. The position of the signal peptide cleavage has not been experimentally proven.

The protein localises to the periplasm. The catalysed reaction is L-methionyl-[protein] + a quinone + H2O = L-methionyl-(S)-S-oxide-[protein] + a quinol. The enzyme catalyses L-methionyl-[protein] + a quinone + H2O = L-methionyl-(R)-S-oxide-[protein] + a quinol. Its function is as follows. Part of the MsrPQ system that repairs oxidized periplasmic proteins containing methionine sulfoxide residues (Met-O), using respiratory chain electrons. Thus protects these proteins from oxidative-stress damage caused by reactive species of oxygen and chlorine generated by the host defense mechanisms. MsrPQ is essential for the maintenance of envelope integrity under bleach stress, rescuing a wide series of structurally unrelated periplasmic proteins from methionine oxidation, including the primary periplasmic chaperone SurA and the lipoprotein Pal. The catalytic subunit MsrP is non-stereospecific, being able to reduce both (R-) and (S-) diastereoisomers of methionine sulfoxide. This chain is Protein-methionine-sulfoxide reductase catalytic subunit MsrP, found in Salmonella newport (strain SL254).